A 405-amino-acid chain; its full sequence is L-rhamnonate dehydratase (405 aa).

His33 and Arg59 together coordinate substrate. Positions 226, 252, and 280 each coordinate Mg(2+). His329 serves as the catalytic Proton acceptor. Residue Glu349 coordinates substrate.

This sequence belongs to the mandelate racemase/muconate lactonizing enzyme family. RhamD subfamily. As to quaternary structure, homooctamer; tetramer of dimers. Mg(2+) is required as a cofactor.

It carries out the reaction L-rhamnonate = 2-dehydro-3-deoxy-L-rhamnonate + H2O. Catalyzes the dehydration of L-rhamnonate to 2-keto-3-deoxy-L-rhamnonate (KDR). The sequence is that of L-rhamnonate dehydratase from Shigella boydii serotype 4 (strain Sb227).